A 600-amino-acid chain; its full sequence is ATP-dependent lipid A-core flippase (600 aa).

The next 4 helical transmembrane spans lie at 26–46 (VGIF…QPML), 82–102 (LLIV…NYFL), 167–187 (VFLF…MLAI), and 266–286 (PMLQ…VLFL). One can recognise an ABC transmembrane type-1 domain in the interval 30-321 (LLSIIGFVIF…LSEVSSTIQK (292 aa)). Positions 353-589 (LEVKNLSFFY…NGYYARLHAM (237 aa)) constitute an ABC transporter domain. Residue 387–394 (GRSGSGKS) coordinates ATP.

Belongs to the ABC transporter superfamily. Lipid exporter (TC 3.A.1.106) family. In terms of assembly, homodimer.

Its subcellular location is the cell inner membrane. It catalyses the reaction ATP + H2O + lipid A-core oligosaccharideSide 1 = ADP + phosphate + lipid A-core oligosaccharideSide 2.. In terms of biological role, involved in lipopolysaccharide (LPS) biosynthesis. Translocates lipid A-core from the inner to the outer leaflet of the inner membrane. Transmembrane domains (TMD) form a pore in the inner membrane and the ATP-binding domain (NBD) is responsible for energy generation. In Pseudomonas savastanoi pv. phaseolicola (strain 1448A / Race 6) (Pseudomonas syringae pv. phaseolicola (strain 1448A / Race 6)), this protein is ATP-dependent lipid A-core flippase.